A 548-amino-acid chain; its full sequence is Tau-cadinol synthase (548 aa).

2 residues coordinate Mg(2+): Asp303 and Asp307. Residues Asp303, Asp307, and Arg443 each contribute to the substrate site. The short motif at 303–307 is the DDXXD motif element; it reads DDTYD.

It belongs to the terpene synthase family. In terms of assembly, monomer. Requires Mg(2+) as cofactor. Mn(2+) is required as a cofactor. As to expression, constitutively expressed in aerial tissues, but barely observed in roots.

The protein resides in the cytoplasm. The catalysed reaction is (2E,6E)-farnesyl diphosphate + H2O = tau-cadinol + diphosphate. It participates in secondary metabolite biosynthesis; terpenoid biosynthesis. Its function is as follows. Sesquiterpene synthase that catalyzes the formation of a blend of sesquiterpenes and sesquiterpenoid alcohols. Converts farnesyl diphosphate to tau-cadinol. This chain is Tau-cadinol synthase, found in Zea mays (Maize).